Consider the following 588-residue polypeptide: MKLEFTEKNYNSFVLQNLNRQRKRKEYWDMALSVDNHVFFAHRNVLAAVSPLVRSLISSNDMKTADELFITIDTSYLSPVTVDQLLDYFYSGKVVISEQNVEELLRGAQYFNTPRLRVHCNDFLIKSICRANCLRYLFLAELFELKEVSDVAYSGIRDNFHYWASPEGSMHFMRCPPVIFGRLLRDENLHVLNEDQALSALINWVYFRKEDREKYFKKFFNYINLNAVSNKTLVFASNKLVGMENTSSHTTLIESVLMDRKQERPCSLLVYQRKGALLDSVVILGGQKAHGQFNDGVFAYIIQENLWMKLSDMPYRAAALSATSAGRYIYISGGTTEQISGLKTAWRYDMDDNSWTKLPDLPIGLVFHTMVTCGGTVYSVGGSIAPRRYVSNIYRYDERKEVWCLAGKMSIPMDGTAVITKGDRHLYIVTGRCLVKGYISRVGVVDCFDTSTGDVVQCITFPIEFNHRPLLSFQQDNILCVHSHRQSVEINLQKVKASKTTTSVPVLPNSCPLDVSHAICSIGDSKVFVCGGVTTASDVQTKDYTINPNAFLLDQKTGKWKTLAPPPEALDCPACCLAKLPCKILQRI.

In terms of domain architecture, BTB spans 12–124 (SFVLQNLNRQ…RLRVHCNDFL (113 aa)). Residues 133 to 235 (CLRYLFLAEL…NAVSNKTLVF (103 aa)) enclose the BACK domain. Residue S149 is modified to Phosphoserine. Kelch repeat units follow at residues 280-327 (SVVI…SAGR), 328-375 (YIYI…TCGG), 377-423 (VYSV…TKGD), 425-475 (HLYI…SFQQ), 476-525 (DNIL…IGDS), and 526-580 (KVFV…LAKL).

In terms of assembly, interacts with CYLC1; the interaction may be relevant for proper acrosome attachment to the nuclear envelope. As to expression, expressed in testis, in spermatozoa (at protein level).

It localises to the cytoplasm. Its subcellular location is the cytoskeleton. The protein resides in the perinuclear theca. The protein localises to the calyx. Required for both nuclear and acrosomal shaping during spermiogenesis. The polypeptide is Calicin (CCIN) (Homo sapiens (Human)).